A 565-amino-acid chain; its full sequence is Translation machinery-associated protein 64 (565 aa).

In terms of domain architecture, PUA spans 89-170; the sequence is LPIVLTHGFV…VAVKIIHHFN (82 aa). An SWIB/MDM2 domain is found at 362–447; it reads TLYKPFNLAK…GEILHPLLTN (86 aa). The SUI1 domain occupies 475–547; that stretch reads IKIITEMKIG…SIIDHLNKLG (73 aa).

The protein belongs to the eIF2D family. Interacts with the 40S ribosomal subunit.

The chain is Translation machinery-associated protein 64 (TMA64) from Saccharomyces cerevisiae (strain ATCC 204508 / S288c) (Baker's yeast).